A 274-amino-acid chain; its full sequence is tRNA pseudouridine synthase A (274 aa).

The active-site Nucleophile is the Asp51. A substrate-binding site is contributed by Tyr109.

This sequence belongs to the tRNA pseudouridine synthase TruA family. In terms of assembly, homodimer.

The enzyme catalyses uridine(38/39/40) in tRNA = pseudouridine(38/39/40) in tRNA. Its function is as follows. Formation of pseudouridine at positions 38, 39 and 40 in the anticodon stem and loop of transfer RNAs. The polypeptide is tRNA pseudouridine synthase A (Acidovorax ebreus (strain TPSY) (Diaphorobacter sp. (strain TPSY))).